Reading from the N-terminus, the 389-residue chain is Phospho-N-acetylmuramoyl-pentapeptide-transferase (389 aa).

The next 10 membrane-spanning stretches (helical) occupy residues 25-45, 73-93, 97-117, 135-155, 190-210, 222-242, 258-278, 286-306, 311-331, and 366-386; these read RAVM…PWVI, TMGG…WGDL, FIWI…VDDY, FWQS…VSEA, ISYP…IVGA, GLVI…AYVM, GAGE…AFLW, VFMG…VAVI, IVLF…MLQV, and QVVV…LSTL.

It belongs to the glycosyltransferase 4 family. MraY subfamily. Requires Mg(2+) as cofactor.

It localises to the cell inner membrane. It carries out the reaction UDP-N-acetyl-alpha-D-muramoyl-L-alanyl-gamma-D-glutamyl-meso-2,6-diaminopimeloyl-D-alanyl-D-alanine + di-trans,octa-cis-undecaprenyl phosphate = di-trans,octa-cis-undecaprenyl diphospho-N-acetyl-alpha-D-muramoyl-L-alanyl-D-glutamyl-meso-2,6-diaminopimeloyl-D-alanyl-D-alanine + UMP. Its pathway is cell wall biogenesis; peptidoglycan biosynthesis. Its function is as follows. Catalyzes the initial step of the lipid cycle reactions in the biosynthesis of the cell wall peptidoglycan: transfers peptidoglycan precursor phospho-MurNAc-pentapeptide from UDP-MurNAc-pentapeptide onto the lipid carrier undecaprenyl phosphate, yielding undecaprenyl-pyrophosphoryl-MurNAc-pentapeptide, known as lipid I. The protein is Phospho-N-acetylmuramoyl-pentapeptide-transferase of Burkholderia ambifaria (strain ATCC BAA-244 / DSM 16087 / CCUG 44356 / LMG 19182 / AMMD) (Burkholderia cepacia (strain AMMD)).